A 65-amino-acid polypeptide reads, in one-letter code: Hirudin-3A (65 aa).

The interval 1–3 (VVY) is interaction with thrombin active site. Cystine bridges form between C6–C14, C16–C28, and C22–C39. Positions 39-65 (CVTGEGTPKPQSHNDGDFEEIPEEYLQ) are disordered. An O-linked (GalNAc...) threonine glycan is attached at T45. The interaction with fibrinogen-binding exosite of thrombin stretch occupies residues 55-65 (DFEEIPEEYLQ). Positions 55 to 65 (DFEEIPEEYLQ) are enriched in acidic residues. Y63 carries the sulfotyrosine modification.

Belongs to the protease inhibitor I14 (hirudin) family.

It is found in the secreted. In terms of biological role, hirudin is a potent thrombin-specific protease inhibitor. It forms a stable non-covalent complex with alpha-thrombin, thereby abolishing its ability to cleave fibrinogen. The polypeptide is Hirudin-3A (Hirudo medicinalis (Medicinal leech)).